The chain runs to 53 residues: Membrane antigen containing repeating peptides (53 aa).

Tandem repeats lie at residues 1–10 (EAEEAARLQA), 11–20 (EAEEAARQQA), 21–30 (EAEEAARLQA), 31–40 (EAEEAARLQA), 41–50 (EAEEAARLQA), and 51–53 (EAE). Residues 1–53 (EAEEAARLQAEAEEAARQQAEAEEAARLQAEAEEAARLQAEAEEAARLQAEAE) are 6 X 10 AA tandem repeats. The disordered stretch occupies residues 1–53 (EAEEAARLQAEAEEAARQQAEAEEAARLQAEAEEAARLQAEAEEAARLQAEAE).

The protein localises to the membrane. This is Membrane antigen containing repeating peptides from Leishmania major.